Consider the following 1742-residue polypeptide: Complement C4 (1742 aa).

Positions 1–19 (MRLLWGLLWAFGLFASSLQ) are cleaved as a signal peptide. Asn60 carries an N-linked (GlcNAc...) asparagine glycan. Cys68 and Cys97 are disulfide-bonded. A glycan (N-linked (GlcNAc...) asparagine) is linked at Asn226. Cys634 and Cys668 are joined by a disulfide. Residues 675-678 (RKKR) constitute a propeptide that is removed on maturation. Disulfide bonds link Cys701/Cys727, Cys702/Cys734, and Cys715/Cys735. An Anaphylatoxin-like domain is found at 701 to 735 (CCQDGLTRLPMVRSCEQRAARVLQPACREPFLSCC). N-linked (GlcNAc...) asparagine glycosylation occurs at Asn861. The segment at residues 1007–1010 (CGEQ) is a cross-link (isoglutamyl cysteine thioester (Cys-Gln)). Asn1325 and Asn1388 each carry an N-linked (GlcNAc...) asparagine glycan. 3 positions are modified to sulfotyrosine: Tyr1414, Tyr1418, and Tyr1420. The propeptide occupies 1445–1451 (RRNRRRR). Cystine bridges form between Cys1469–Cys1533, Cys1581–Cys1586, Cys1593–Cys1671, Cys1616–Cys1740, and Cys1716–Cys1725. In terms of domain architecture, NTR spans 1593-1740 (CPRQRRALER…FIQEYSTLGC (148 aa)).

In absence of complement activation, circulates in blood as a disulfide-linked trimer of an alpha, beta and gamma chain. In terms of assembly, complement C4b is composed of complement C4b-A, complement C4 beta and complement C4 gamma chains that are associated via disulfide bonds. Non-enzymatic component of the C3 convertase, also named C4bC2b, composed of the serine protease complement C2b (C2), as well as complement C4b. Non-enzymatic component of the C5 convertase, also named C4bC2bC3b, composed of the serine protease complement C2b (C2), complement C3b, as well as complement C4b. Prior to secretion, the single-chain precursor is enzymatically cleaved by plasminogen (PLG) to yield non-identical chains alpha, beta and gamma. During activation of the complement systems, the alpha chain is cleaved into C4a and C4b by different proteases depending on the complement pathway: C4b stays linked to the beta and gamma chains, while C4a is released in the plasma. The alpha chain is cleaved by C1S to generate C4a and C4b following activation by the classical complement system. The alpha chain is cleaved to generate C4a and C4b by MASP2 following activation by the lectin complement system. The alpha chain is cleaved by GZMK to generate C4a and C4b following activation by the GZMK complement system. Further degradation of C4b by C1 into the inactive fragments C4c and C4d blocks the generation of C3 convertase. The proteolytic cleavages often are incomplete so that many structural forms can be found in plasma. In terms of processing, upon activation, the internal thioester bond reacts with carbohydrate antigens on the target surface to form amide or ester bonds, leading to covalent association with the surface of pathogens. Post-translationally, complement C4b interacts with complement C3b via a thioester linkage. N- and O-glycosylated. O-glycosylated with a core 1 or possibly core 8 glycan.

The protein localises to the secreted. It localises to the cell surface. Precursor of non-enzymatic components of the classical, lectin and GZMK complement pathways, which consist in a cascade of proteins that leads to phagocytosis and breakdown of pathogens and signaling that strengthens the adaptive immune system. Its function is as follows. Non-enzymatic component of C3 and C5 convertases. Generated following cleavage by complement proteases (C1S, MASP2 or GZMK, depending on the complement pathway), it covalently attaches to the surface of pathogens, where it acts as an opsonin that marks the surface of antigens for removal. It then recruits the serine protease complement C2b to form the C3 and C5 convertases, which cleave and activate C3 and C5, respectively, the next components of the complement pathways. Complement C4b-A isotype is responsible for effective binding to form amide bonds with immune aggregates or protein antigens, while complement C4b-B isotype catalyzes the transacylation of the thioester carbonyl group to form ester bonds with carbohydrate antigens. In terms of biological role, putative humoral mediator released following cleavage by complement proteases (C1S, MASP2 or GZMK, depending on the complement pathway). While it is strongly similar to anaphylatoxins, its role is unclear. Was reported to act as a mediator of local inflammatory process; however these effects were probably due to contamination with C3a and/C5a anaphylatoxins in biological assays. In Cavia porcellus (Guinea pig), this protein is Complement C4.